We begin with the raw amino-acid sequence, 192 residues long: RNA-free ribonuclease P (192 aa).

This sequence belongs to the HARP family.

The catalysed reaction is Endonucleolytic cleavage of RNA, removing 5'-extranucleotides from tRNA precursor.. In terms of biological role, RNA-free RNase P that catalyzes the removal of the 5'-leader sequence from pre-tRNA to produce the mature 5'-terminus. This chain is RNA-free ribonuclease P, found in Alkalilimnicola ehrlichii (strain ATCC BAA-1101 / DSM 17681 / MLHE-1).